Consider the following 705-residue polypeptide: Polyribonucleotide nucleotidyltransferase (705 aa).

2 residues coordinate Mg(2+): aspartate 486 and aspartate 492. Residues proline 553–isoleucine 612 form the KH domain. The S1 motif domain maps to glycine 622–lysine 690.

Belongs to the polyribonucleotide nucleotidyltransferase family. In terms of assembly, component of the RNA degradosome, which is a multiprotein complex involved in RNA processing and mRNA degradation. The cofactor is Mg(2+).

It localises to the cytoplasm. It carries out the reaction RNA(n+1) + phosphate = RNA(n) + a ribonucleoside 5'-diphosphate. Functionally, involved in mRNA degradation. Catalyzes the phosphorolysis of single-stranded polyribonucleotides processively in the 3'- to 5'-direction. This Colwellia psychrerythraea (strain 34H / ATCC BAA-681) (Vibrio psychroerythus) protein is Polyribonucleotide nucleotidyltransferase.